The following is a 548-amino-acid chain: Cytochrome P450 monooxygenase lcsK (548 aa).

2 consecutive transmembrane segments (helical) span residues histidine 28–phenylalanine 48 and valine 68–phenylalanine 88. 4 N-linked (GlcNAc...) asparagine glycosylation sites follow: asparagine 172, asparagine 223, asparagine 242, and asparagine 404. Cysteine 487 contributes to the heme binding site.

Belongs to the cytochrome P450 family. The cofactor is heme.

The protein resides in the membrane. It participates in secondary metabolite biosynthesis. Its function is as follows. Cytochrome P450 monooxygenase; part of the gene cluster that mediates the biosynthesis of the lipopeptide antibiotics leucinostatins that show extensive biological activities, including antimalarial, antiviral, antibacterial, antifungal, and antitumor activities, as well as phytotoxic. Leucinostatin A contains nine amino acid residues, including the unusual amino acid 4-methyl-L-proline (MePro), 2-amino-6-hydroxy-4-methyl-8-oxodecanoic acid (AHyMeOA), 3-hydroxyleucine (HyLeu), alpha-aminoisobutyric acid (AIB), beta-Ala, a 4-methylhex-2-enoic acid at the N-terminus as well as a N1,N1-dimethylpropane-1,2-diamine (DPD) at the C-terminus. The biosynthesis of leucinostatins is probably initiated with the assembly of 4-methylhex-2-enoic acid by a reducing PKS. Two reducing polyketide synthases, lcsB and lcsC, have been identified in the cluster and it is not clear which is the one that assembles 4-methylhex-2-enoic acid since both contain KS, AT, DH, cMT, ER, KR and ACP domains. The polyketide residue might be transferred to the NRPS lcsA, mediated by two additional enzymes, the acyl-CoA ligase lcsD and the thioesterase lcsE. The linear polyketide carboxylic acid, which is released from PKS, is converted to a CoA thioester by lcsD, and then lcsE hydrolyzes the thiol bond and shuttles the polyketide intermediate to lcsA. The C domain of the first module catalyzed the condensation of 4-methylhex-2-enoic acid and MePro carried by domain A1, followed by successive condensations of nine amino acids to trigger the elongation of the linear peptide. A5 and A6 domains of lcsA are proposed to incorporate leucine, A2 AHyMeOA, and A3 incorporates HyLeu. A4, A7 and A8 incorporate AIB. The AHyMeOA in leucinostatin A activated by the A2 might be produced by the second PKS (lcsB or lcsC) present within the cluster. The MePro is probably produced via leucine cyclization and may originate from a separate pathway, independent of the cluster. Another nonproteinogenic amino acid, beta-Ala, could be produced by an aspartic acid decarboxylase also localized outside of the cluster. Two candidates are VFPBJ_01400 and VFPBJ_10476. The final peptide scaffold may be released by the NAD(P)H-dependent thioester reductase (TE) at the C-terminal region of lcsA. Transamination of the lcsA product by the transaminase lcsP may produce DPD at the C-terminus. Further hydroxylation steps performed alternatively by the cytochrome P450 monooxygenases lcsI, lcsK and lcsN then yield the non-methylated leucinostatins precursor. It is also possible that leucines can be hydroxylated prior to their incorporation into the peptide. Varying extents of methylation then lead to the formation of leucinostatins A and B. The chain is Cytochrome P450 monooxygenase lcsK from Purpureocillium lilacinum (Paecilomyces lilacinus).